The following is a 571-amino-acid chain: Membrane protein insertase YidC (571 aa).

A helical membrane pass occupies residues 4–24 (TRVFLIFAWLMVAVLLWMEWS). The interval 29-78 (APTPAPTTTSAPAAAQSVPGANPGAIPSAQVPGAPGQAAAQAQASATPAS) is disordered. Composition is skewed to low complexity over residues 34-43 (PTTTSAPAAA) and 55-78 (PSAQ…TPAS). The next 4 membrane-spanning stretches (helical) occupy residues 369–389 (LVGN…LVLY), 440–460 (GGCL…WVLV), 483–503 (YFIL…LTPA), and 518–538 (PLVF…YWVV).

This sequence belongs to the OXA1/ALB3/YidC family. Type 1 subfamily. In terms of assembly, interacts with the Sec translocase complex via SecD. Specifically interacts with transmembrane segments of nascent integral membrane proteins during membrane integration.

Its subcellular location is the cell inner membrane. Required for the insertion and/or proper folding and/or complex formation of integral membrane proteins into the membrane. Involved in integration of membrane proteins that insert both dependently and independently of the Sec translocase complex, as well as at least some lipoproteins. Aids folding of multispanning membrane proteins. This chain is Membrane protein insertase YidC, found in Stenotrophomonas maltophilia (strain K279a).